The following is a 359-amino-acid chain: Fructose-bisphosphate aldolase (359 aa).

Ser-62 provides a ligand contact to D-glyceraldehyde 3-phosphate. Asp-110 functions as the Proton donor in the catalytic mechanism. Zn(2+)-binding residues include His-111, Asp-145, Glu-175, and His-227. Gly-228 serves as a coordination point for dihydroxyacetone phosphate. His-265 contributes to the Zn(2+) binding site. Dihydroxyacetone phosphate contacts are provided by residues 266-268 (GGS) and 287-290 (NIDT).

Belongs to the class II fructose-bisphosphate aldolase family. In terms of assembly, homodimer. Zn(2+) is required as a cofactor.

The catalysed reaction is beta-D-fructose 1,6-bisphosphate = D-glyceraldehyde 3-phosphate + dihydroxyacetone phosphate. Its pathway is carbohydrate degradation; glycolysis; D-glyceraldehyde 3-phosphate and glycerone phosphate from D-glucose: step 4/4. In terms of biological role, catalyzes the aldol condensation of dihydroxyacetone phosphate (DHAP or glycerone-phosphate) with glyceraldehyde 3-phosphate (G3P) to form fructose 1,6-bisphosphate (FBP) in gluconeogenesis and the reverse reaction in glycolysis. The protein is Fructose-bisphosphate aldolase (fba) of Haemophilus influenzae (strain ATCC 51907 / DSM 11121 / KW20 / Rd).